We begin with the raw amino-acid sequence, 335 residues long: DNA-directed RNA polymerase subunit alpha (335 aa).

The interval 1–231 is alpha N-terminal domain (alpha-NTD); sequence MVREKITVST…DLLIPFLHTK (231 aa). Positions 263 to 335 are alpha C-terminal domain (alpha-CTD); sequence KKMALKSIFI…FVIDLPKNKF (73 aa).

Belongs to the RNA polymerase alpha chain family. As to quaternary structure, in plastids the minimal PEP RNA polymerase catalytic core is composed of four subunits: alpha, beta, beta', and beta''. When a (nuclear-encoded) sigma factor is associated with the core the holoenzyme is formed, which can initiate transcription.

Its subcellular location is the plastid. It localises to the chloroplast. It carries out the reaction RNA(n) + a ribonucleoside 5'-triphosphate = RNA(n+1) + diphosphate. Functionally, DNA-dependent RNA polymerase catalyzes the transcription of DNA into RNA using the four ribonucleoside triphosphates as substrates. This is DNA-directed RNA polymerase subunit alpha from Helianthus annuus (Common sunflower).